A 117-amino-acid polypeptide reads, in one-letter code: Carboxysome shell protein CcmK4 (117 aa).

The region spanning Ala-5–Pro-91 is the BMC domain.

The protein belongs to the bacterial microcompartments protein family. CcmK subfamily. As to quaternary structure, crystallizes as a homohexamer. Interacts stably with CcmK3, forming heterohexamers that can make dodecamers. Heterohexamers have a 1:2 CcmK3:CcmK4 stoichiometry. Upon expression in E.coli forms large aggregates.

It is found in the carboxysome. In terms of biological role, a probably essential, minor shell protein of the carboxysome, a polyhedral inclusion where RuBisCO (ribulose bisphosphate carboxylase, rbcL-rbcS) is sequestered. Hexamers form sheets that form the facets of the polyhedral carboxysome. In PCC 7418 there are several CcmK paralogs with presumably functional differences. This subunit can probably make both homohexamers and heterohexamers with CcmK3. Both hexamers can also make dodecamers, formation depends on buffer conditions. This chain is Carboxysome shell protein CcmK4, found in Halothece sp. (strain PCC 7418) (Synechococcus sp. (strain PCC 7418)).